We begin with the raw amino-acid sequence, 157 residues long: Small ribosomal subunit protein uS7 (157 aa).

The protein belongs to the universal ribosomal protein uS7 family. Part of the 30S ribosomal subunit. Contacts proteins S9 and S11.

Functionally, one of the primary rRNA binding proteins, it binds directly to 16S rRNA where it nucleates assembly of the head domain of the 30S subunit. Is located at the subunit interface close to the decoding center, probably blocks exit of the E-site tRNA. The chain is Small ribosomal subunit protein uS7 from Stenotrophomonas maltophilia (strain R551-3).